Reading from the N-terminus, the 204-residue chain is uncharacterized protein (204 aa).

Over residues 1–10 the composition is skewed to polar residues; the sequence is MQQAITQQEK. 2 disordered regions span residues 1-20 and 70-99; these read MQQAITQQEKAQPKSVLPNR and DEARKLAEQQRIEDATRTQSKTTEDMKNTE. In terms of domain architecture, SPOR spans 131–204; sequence VRDSKKFGLQ…TVTDCVVIGM (74 aa).

To E.coli FtsN repeat regions.

This is an uncharacterized protein from Haemophilus influenzae (strain ATCC 51907 / DSM 11121 / KW20 / Rd).